A 545-amino-acid polypeptide reads, in one-letter code: B3 domain-containing protein Os03g0620500 (545 aa).

Residues 26 to 119 (MKCFHRQMSA…RRASGVQERN (94 aa)) constitute a DNA-binding region (TF-B3 1). The segment at 111–188 (RASGVQERNA…SSSEHESSYD (78 aa)) is disordered. Basic and acidic residues predominate over residues 173–186 (EEAKESSSSEHESS). Positions 231 to 331 (VTTMKHSNVN…RATVHLLRET (101 aa)) form a DNA-binding region, TF-B3 2. Residues 368–400 (RRGTMEPSTTNVKKEADNEQCNNGQGKRQEPLN) form a disordered region. The TF-B3 3 DNA-binding region spans 441–542 (YVSIMNKSNV…AMKVHIIRHN (102 aa)).

Its subcellular location is the nucleus. This Oryza sativa subsp. japonica (Rice) protein is B3 domain-containing protein Os03g0620500.